We begin with the raw amino-acid sequence, 268 residues long: Tryptophan synthase alpha chain (268 aa).

Active-site proton acceptor residues include E49 and D60.

The protein belongs to the TrpA family. As to quaternary structure, tetramer of two alpha and two beta chains.

The catalysed reaction is (1S,2R)-1-C-(indol-3-yl)glycerol 3-phosphate + L-serine = D-glyceraldehyde 3-phosphate + L-tryptophan + H2O. The protein operates within amino-acid biosynthesis; L-tryptophan biosynthesis; L-tryptophan from chorismate: step 5/5. Its function is as follows. The alpha subunit is responsible for the aldol cleavage of indoleglycerol phosphate to indole and glyceraldehyde 3-phosphate. The chain is Tryptophan synthase alpha chain from Pectobacterium atrosepticum (strain SCRI 1043 / ATCC BAA-672) (Erwinia carotovora subsp. atroseptica).